A 2475-amino-acid chain; its full sequence is Polyprotein pp220 (2475 aa).

Gly-2 is lipidated: N-myristoyl glycine; by host. Positions 2185–2212 (KNQLIADLTTIREQLVSMRREVENMIQT) form a coiled coil.

The protein belongs to the asfivirus polyprotein pp220 family. The polyprotein is not glycosylated. Post-translationally, specific enzymatic cleavages in vivo by the viral pS273R protease yield mature proteins.

It localises to the host cytoplasm. The protein resides in the host perinuclear region. Its subcellular location is the virion. The protein localises to the host nucleus. Essential for the core assembly. Its myristoyl moiety may function as a membrane-anchoring signal to bind the developing core shell to the inner viral envelope. Functionally, the structural protein p34 is a component of the virus core shell. Its function is as follows. The structural protein p14 is a component of the virus core shell. In terms of biological role, the structural protein p37 is a component of the virus core shell. The structural protein p150 is a component of the virus core shell. In Ornithodoros (relapsing fever ticks), this protein is Polyprotein pp220.